The chain runs to 194 residues: Thymidine kinase (194 aa).

Residues 15-22 (GSMFSGKS) and 88-91 (DEVQ) each bind ATP. Glutamate 89 (proton acceptor) is an active-site residue. Positions 145, 148, 183, and 186 each coordinate Zn(2+).

The protein belongs to the thymidine kinase family. As to quaternary structure, homotetramer.

The protein localises to the cytoplasm. It carries out the reaction thymidine + ATP = dTMP + ADP + H(+). This Bacillus cereus (strain AH820) protein is Thymidine kinase.